The chain runs to 340 residues: CRISPR-associated protein Cas7 (340 aa).

Component of the Cascade-like complex (Cascade I-B), composed of Cas5, Cas6, Cas7 and crRNA.

It localises to the cytoplasm. CRISPR (clustered regularly interspaced short palindromic repeat) is an adaptive immune system that provides protection against mobile genetic elements (viruses, transposable elements and conjugative plasmids). CRISPR clusters contain sequences complementary to antecedent mobile elements and target invading nucleic acids. CRISPR clusters are transcribed and processed into CRISPR RNA (crRNA). Plasmid targeted by CRISPR locus P1 transform wild-type cells very poorly. This protein helps process or stabilize pre-crRNA into individual crRNA units, in vivo Cas6 and Cas7 are also required for optimal crRNA processing and/or stability. In Haloferax volcanii (strain ATCC 29605 / DSM 3757 / JCM 8879 / NBRC 14742 / NCIMB 2012 / VKM B-1768 / DS2) (Halobacterium volcanii), this protein is CRISPR-associated protein Cas7.